A 364-amino-acid polypeptide reads, in one-letter code: MISDFNNQEITLEDLEQNNVKLKEGKAKVQFLMRFSLVFSNIFTHIFLFLLIIVSGLFFGLRYTYYNYKIDLITNVYKIKPSIPKLKEIYKEVLEVVDEVKRETDKNSEDSLINKIDEIRGIVKEVTNIAKEFDEKSKEVKPKVEKVIQEGKQVTSNLDKITKEIQALQVNGNGLASRVRRSLTGDINTITNLANNIDFDFNSVKESIEKITGLAQQISKEGKSITKNVEEIKNEVEYFTGKSKEPLKDIDKIKQIYDKKIPIFEKNNKKLQEIWNKLMGIYNEFTVKETKKDYYNYVIYILLFLIIDSLILLVITYMSMISKTIKKLLLFYIFGLLSFNPIVWASIIISLFSRPIKNRKNKFY.

Transmembrane regions (helical) follow at residues 41–61 (NIFT…FFGL), 298–318 (VIYI…ITYM), and 329–349 (LLFY…SIII).

It is found in the membrane. This is an uncharacterized protein from Mycoplasma capricolum subsp. capricolum (strain California kid / ATCC 27343 / NCTC 10154).